The sequence spans 386 residues: 5-amino-6-(D-ribitylamino)uracil--L-tyrosine 4-hydroxyphenyl transferase (386 aa).

Residues 56-303 (VSYVINRNLN…MAVARLYLGD (248 aa)) enclose the Radical SAM core domain. [4Fe-4S] cluster contacts are provided by C70, C74, and C77.

It belongs to the radical SAM superfamily. CofH family. As to quaternary structure, consists of two subunits, CofG and CofH. [4Fe-4S] cluster serves as cofactor.

It carries out the reaction 5-amino-6-(D-ribitylamino)uracil + L-tyrosine + S-adenosyl-L-methionine = 5-amino-5-(4-hydroxybenzyl)-6-(D-ribitylimino)-5,6-dihydrouracil + 2-iminoacetate + 5'-deoxyadenosine + L-methionine + H(+). It participates in cofactor biosynthesis; coenzyme F0 biosynthesis. Functionally, catalyzes the radical-mediated synthesis of 5-amino-5-(4-hydroxybenzyl)-6-(D-ribitylimino)-5,6-dihydrouracil from 5-amino-6-(D-ribitylamino)uracil and L-tyrosine. The protein is 5-amino-6-(D-ribitylamino)uracil--L-tyrosine 4-hydroxyphenyl transferase of Synechococcus elongatus (strain ATCC 33912 / PCC 7942 / FACHB-805) (Anacystis nidulans R2).